A 258-amino-acid chain; its full sequence is 5'-nucleotidase SurE (258 aa).

Asp-14, Asp-15, Ser-45, and Asn-101 together coordinate a divalent metal cation.

It belongs to the SurE nucleotidase family. Requires a divalent metal cation as cofactor.

The protein localises to the cytoplasm. The catalysed reaction is a ribonucleoside 5'-phosphate + H2O = a ribonucleoside + phosphate. In terms of biological role, nucleotidase that shows phosphatase activity on nucleoside 5'-monophosphates. The sequence is that of 5'-nucleotidase SurE from Chlorobium phaeobacteroides (strain DSM 266 / SMG 266 / 2430).